The following is a 100-amino-acid chain: Putative membrane protein insertion efficiency factor (100 aa).

It belongs to the UPF0161 family.

Its subcellular location is the cell membrane. In terms of biological role, could be involved in insertion of integral membrane proteins into the membrane. The protein is Putative membrane protein insertion efficiency factor of Enterococcus faecalis (strain ATCC 700802 / V583).